Here is a 568-residue protein sequence, read N- to C-terminus: Transport inhibitor response 1-like protein Os11g0515500 (568 aa).

In terms of domain architecture, F-box spans 1 to 45 (MVFFPEEVVEHILGFLASHRDRNAVSLVCREWYRVERLSRRSVLV). 1D-myo-inositol hexakisphosphate is bound by residues K69, 103-104 (KR), and R335. An interaction with auxin-responsive proteins region spans residues 338-343 (PANANA). 390–392 (SFR) provides a ligand contact to 1D-myo-inositol hexakisphosphate. The interval 394–398 (CVLDP) is interaction with auxin-responsive proteins. R425 is a binding site for 1D-myo-inositol hexakisphosphate. The interaction with auxin-responsive proteins stretch occupies residues 453 to 454 (AF). 1D-myo-inositol hexakisphosphate contacts are provided by residues 473-474 (KK) and R498.

As to quaternary structure, part of a SCF (SKP1-cullin-F-box) protein ligase complex. May interact with auxin and auxin-responsive proteins.

Its subcellular location is the nucleus. Its pathway is protein modification; protein ubiquitination. This chain is Transport inhibitor response 1-like protein Os11g0515500, found in Oryza sativa subsp. japonica (Rice).